Reading from the N-terminus, the 240-residue chain is (DL)-glycerol-3-phosphatase 2 (240 aa).

The Nucleophile role is filled by Asp20. Mg(2+)-binding residues include Asp20, Asp22, and Asp185. Catalysis depends on Asp22, which acts as the Proton donor.

Belongs to the HAD-like hydrolase superfamily. DOG/GPP family. Mg(2+) serves as cofactor. As to expression, ubiquitous with highest expression in siliques. Mainly restricted to the meristem of immature flower and vascular elements of the root, shoot, leave, siliqua and developing embryo (at the protein level).

It is found in the cytoplasm. It carries out the reaction sn-glycerol 1-phosphate + H2O = glycerol + phosphate. The catalysed reaction is sn-glycerol 3-phosphate + H2O = glycerol + phosphate. Its function is as follows. Acts as a glycerol-3-phosphatase with higher stereospecificity for L-glycerol-3-phosphate than DL-glycerol-3-phosphate. This Arabidopsis thaliana (Mouse-ear cress) protein is (DL)-glycerol-3-phosphatase 2 (GPP2).